The chain runs to 214 residues: Probable nicotinate-nucleotide adenylyltransferase (214 aa).

Belongs to the NadD family.

The catalysed reaction is nicotinate beta-D-ribonucleotide + ATP + H(+) = deamido-NAD(+) + diphosphate. It participates in cofactor biosynthesis; NAD(+) biosynthesis; deamido-NAD(+) from nicotinate D-ribonucleotide: step 1/1. Its function is as follows. Catalyzes the reversible adenylation of nicotinate mononucleotide (NaMN) to nicotinic acid adenine dinucleotide (NaAD). This Buchnera aphidicola subsp. Acyrthosiphon pisum (strain Tuc7) protein is Probable nicotinate-nucleotide adenylyltransferase.